Consider the following 158-residue polypeptide: Small ribosomal subunit protein uS17 (158 aa).

Position 2 is an N-acetylalanine (Ala-2). Arg-22 carries the citrulline modification. N6-acetyllysine occurs at positions 38, 45, and 58. A lipid anchor (S-palmitoyl cysteine) is attached at Cys-60. Residue Ser-67 is modified to Phosphoserine. Arg-69 carries the post-translational modification Omega-N-methylarginine. Phosphoserine is present on Ser-110.

It belongs to the universal ribosomal protein uS17 family. Component of the small ribosomal subunit. Part of the small subunit (SSU) processome, composed of more than 70 proteins and the RNA chaperone small nucleolar RNA (snoRNA) U3. Citrullinated by PADI4.

It localises to the cytoplasm. The protein localises to the nucleus. It is found in the nucleolus. Its function is as follows. Component of the small ribosomal subunit. The ribosome is a large ribonucleoprotein complex responsible for the synthesis of proteins in the cell. Part of the small subunit (SSU) processome, first precursor of the small eukaryotic ribosomal subunit. During the assembly of the SSU processome in the nucleolus, many ribosome biogenesis factors, an RNA chaperone and ribosomal proteins associate with the nascent pre-rRNA and work in concert to generate RNA folding, modifications, rearrangements and cleavage as well as targeted degradation of pre-ribosomal RNA by the RNA exosome. This chain is Small ribosomal subunit protein uS17 (Rps11), found in Mus musculus (Mouse).